The primary structure comprises 713 residues: Polyphosphate kinase (713 aa).

Asn63 serves as a coordination point for ATP. 2 residues coordinate Mg(2+): Arg394 and Arg424. Residue His454 is the Phosphohistidine intermediate of the active site. ATP-binding residues include Tyr487, Arg583, and His611.

Belongs to the polyphosphate kinase 1 (PPK1) family. Mg(2+) is required as a cofactor. Post-translationally, an intermediate of this reaction is the autophosphorylated ppk in which a phosphate is covalently linked to a histidine residue through a N-P bond.

The catalysed reaction is [phosphate](n) + ATP = [phosphate](n+1) + ADP. Catalyzes the reversible transfer of the terminal phosphate of ATP to form a long-chain polyphosphate (polyP). The polypeptide is Polyphosphate kinase (Prosthecochloris aestuarii (strain DSM 271 / SK 413)).